The following is a 210-amino-acid chain: 7-carboxy-7-deazaguanine synthase (210 aa).

Residues 12–14 (LQG) and Arg27 contribute to the substrate site. The Radical SAM core domain maps to 18–210 (QAGKAAVFCR…VQTHKYLGLP (193 aa)). [4Fe-4S] cluster contacts are provided by Cys31, Cys46, and Cys49. A Mg(2+)-binding site is contributed by Thr51. Thr90 serves as a coordination point for substrate. S-adenosyl-L-methionine is bound by residues Gly92, 133-135 (SPK), and 173-176 (QPMD). Pro210 is a binding site for substrate.

This sequence belongs to the radical SAM superfamily. 7-carboxy-7-deazaguanine synthase family. As to quaternary structure, homodimer. [4Fe-4S] cluster is required as a cofactor. The cofactor is S-adenosyl-L-methionine. It depends on Mg(2+) as a cofactor.

It carries out the reaction 6-carboxy-5,6,7,8-tetrahydropterin + H(+) = 7-carboxy-7-deazaguanine + NH4(+). It functions in the pathway purine metabolism; 7-cyano-7-deazaguanine biosynthesis. Catalyzes the complex heterocyclic radical-mediated conversion of 6-carboxy-5,6,7,8-tetrahydropterin (CPH4) to 7-carboxy-7-deazaguanine (CDG), a step common to the biosynthetic pathways of all 7-deazapurine-containing compounds. This Caulobacter vibrioides (strain ATCC 19089 / CIP 103742 / CB 15) (Caulobacter crescentus) protein is 7-carboxy-7-deazaguanine synthase.